A 142-amino-acid polypeptide reads, in one-letter code: Large ribosomal subunit protein uL13 (142 aa).

Belongs to the universal ribosomal protein uL13 family. Part of the 50S ribosomal subunit.

Its function is as follows. This protein is one of the early assembly proteins of the 50S ribosomal subunit, although it is not seen to bind rRNA by itself. It is important during the early stages of 50S assembly. This Pseudomonas syringae pv. syringae (strain B728a) protein is Large ribosomal subunit protein uL13.